Consider the following 228-residue polypeptide: Probable 26S proteasome regulatory subunit p28 (228 aa).

6 ANK repeats span residues 1 to 30 (MSNYPLHQACMENEFFKVQELLHSKPSLLL), 35 to 64 (DGRIPLHWSVSFQAHEITSFLLSKMENVNL), 71 to 100 (SGWTPFHIACSVGNLEVVKSLYDRPLKPDL), 106 to 135 (QGVTCLHLAVGKKWFEVSQFLIENGASVRI), 139 to 168 (FNQIPLHRAASVGSLKLIELLCGLGKSAVN), and 173 to 203 (QGWTPLFHALAEGHGDAAVLLVEKYGAEYDL).

In terms of assembly, interacts with RPT3.

Functionally, acts as a chaperone during the assembly of the 26S proteasome, specifically of the 19S regulatory complex (RC) and appears to have an overlapping role with RPN14. The polypeptide is Probable 26S proteasome regulatory subunit p28 (NAS6) (Saccharomyces cerevisiae (strain ATCC 204508 / S288c) (Baker's yeast)).